A 209-amino-acid polypeptide reads, in one-letter code: Large ribosomal subunit protein uL3 (209 aa).

Belongs to the universal ribosomal protein uL3 family. Part of the 50S ribosomal subunit. Forms a cluster with proteins L14 and L19.

Functionally, one of the primary rRNA binding proteins, it binds directly near the 3'-end of the 23S rRNA, where it nucleates assembly of the 50S subunit. The sequence is that of Large ribosomal subunit protein uL3 from Lactiplantibacillus plantarum (strain ATCC BAA-793 / NCIMB 8826 / WCFS1) (Lactobacillus plantarum).